The primary structure comprises 261 residues: Cytochrome c oxidase subunit 3 (261 aa).

At 1 to 15 the chain is on the mitochondrial matrix side; that stretch reads MTHQLHAYHMVKPSP. Residues 16-34 traverse the membrane as a helical segment; the sequence is WPLTGALSAFLLTSGLIMW. Residues 35–40 are Mitochondrial intermembrane-facing; sequence FHFYST. The chain crosses the membrane as a helical span at residues 41 to 66; that stretch reads ALLTLGLLTNVLTMYQWWRDIIREST. Topologically, residues 67-72 are mitochondrial matrix; the sequence is YQGHHT. Residues 73 to 105 form a helical membrane-spanning segment; that stretch reads TPVQKSLRYGMTLFIISEVFFFAGFFWAFYHSS. The Mitochondrial intermembrane portion of the chain corresponds to 106–128; the sequence is LAPTPRLGCHWPPTGITPLNPLE. A helical transmembrane segment spans residues 129-152; sequence VPLLNTSVLLASGVTITWAHHSLM. The Mitochondrial matrix segment spans residues 153 to 155; the sequence is NGN. The chain crosses the membrane as a helical span at residues 156–183; sequence RKQTIQALLITILLGTYFTLVQISEYFE. Residues 184–190 are Mitochondrial intermembrane-facing; the sequence is APFTISD. Residues 191–223 traverse the membrane as a helical segment; the sequence is GIYGSTFFVATGFHGLHVIIGSTFLLICLIRQL. Residues 224–232 are Mitochondrial matrix-facing; the sequence is FYHFTPSHH. Residues 233–256 form a helical membrane-spanning segment; sequence FGFEAAAWYWHFVDVIWLFLYISI. The Mitochondrial intermembrane segment spans residues 257 to 261; that stretch reads YWWGS.

This sequence belongs to the cytochrome c oxidase subunit 3 family. Component of the cytochrome c oxidase (complex IV, CIV), a multisubunit enzyme composed of 14 subunits. The complex is composed of a catalytic core of 3 subunits MT-CO1, MT-CO2 and MT-CO3, encoded in the mitochondrial DNA, and 11 supernumerary subunits COX4I, COX5A, COX5B, COX6A, COX6B, COX6C, COX7A, COX7B, COX7C, COX8 and NDUFA4, which are encoded in the nuclear genome. The complex exists as a monomer or a dimer and forms supercomplexes (SCs) in the inner mitochondrial membrane with NADH-ubiquinone oxidoreductase (complex I, CI) and ubiquinol-cytochrome c oxidoreductase (cytochrome b-c1 complex, complex III, CIII), resulting in different assemblies (supercomplex SCI(1)III(2)IV(1) and megacomplex MCI(2)III(2)IV(2)).

The protein localises to the mitochondrion inner membrane. It carries out the reaction 4 Fe(II)-[cytochrome c] + O2 + 8 H(+)(in) = 4 Fe(III)-[cytochrome c] + 2 H2O + 4 H(+)(out). In terms of biological role, component of the cytochrome c oxidase, the last enzyme in the mitochondrial electron transport chain which drives oxidative phosphorylation. The respiratory chain contains 3 multisubunit complexes succinate dehydrogenase (complex II, CII), ubiquinol-cytochrome c oxidoreductase (cytochrome b-c1 complex, complex III, CIII) and cytochrome c oxidase (complex IV, CIV), that cooperate to transfer electrons derived from NADH and succinate to molecular oxygen, creating an electrochemical gradient over the inner membrane that drives transmembrane transport and the ATP synthase. Cytochrome c oxidase is the component of the respiratory chain that catalyzes the reduction of oxygen to water. Electrons originating from reduced cytochrome c in the intermembrane space (IMS) are transferred via the dinuclear copper A center (CU(A)) of subunit 2 and heme A of subunit 1 to the active site in subunit 1, a binuclear center (BNC) formed by heme A3 and copper B (CU(B)). The BNC reduces molecular oxygen to 2 water molecules using 4 electrons from cytochrome c in the IMS and 4 protons from the mitochondrial matrix. In Papio hamadryas (Hamadryas baboon), this protein is Cytochrome c oxidase subunit 3 (MT-CO3).